Consider the following 420-residue polypeptide: MTLLAVNGGSPIRSQQWPLWPAPAPGALDALNEVLHSGRWAISGPYQGKQSFERRFAAAFAEFHEIGHCVPTSSGTASLMVALEACGVGAGDEVIIPGLTWVANASTVAGVNAVPVPVDVDPQTLCLDPAAVERAITPRTAAIVVVHLYSAVADLDALTAIAERHEIPLIEDCAQAHGARYRDRRVGTFGAFGTFSMQHSKVLTSGEGGAVITGDAALSRRAEHLRADGRTYTPDEPAVGEMELAQTAELMGSNRCLSEFQAALLLGQLELLDEQNERRRANAALLDEGLGALGIQPQVSSPGTTERTYYEWAGRIEDDGIGQIGVERIAPAVAAELSGAAIYASYPPMNHNRLYQPATRARFKGIAGLDLTGYSLPVAEDAGQRVVTIHHSALLGDESDMKDIVRAFEKVFANHRELRG.

N6-(pyridoxal phosphate)lysine is present on K201.

The protein belongs to the DegT/DnrJ/EryC1 family. L-glutamine:2-deoxy-scyllo-inosose/scyllo-inosose aminotransferase subfamily. It depends on pyridoxal 5'-phosphate as a cofactor.

The catalysed reaction is 2-deoxy-L-scyllo-inosose + L-glutamine = 2-deoxy-scyllo-inosamine + 2-oxoglutaramate. It catalyses the reaction 3-amino-2,3-dideoxy-scyllo-inosose + L-glutamine = 2-deoxystreptamine + 2-oxoglutaramate. It functions in the pathway metabolic intermediate biosynthesis; 2-deoxystreptamine biosynthesis; 2-deoxystreptamine from D-glucose 6-phosphate: step 2/4. The protein operates within antibiotic biosynthesis; gentamicin biosynthesis. Catalyzes the PLP-dependent transamination of 2-deoxy-scyllo-inosose (2-DOI) to form 2-deoxy-scyllo-inosamine (2-DOIA) using L-glutamine as the amino donor. Also catalyzes the transamination of 3-amino-2,3-dideoxy-scyllo-inosose (keto-2-DOIA) into 2-deoxystreptamine (2-DOS). This chain is L-glutamine:2-deoxy-scyllo-inosose aminotransferase (gntA), found in Micromonospora echinospora (Micromonospora purpurea).